A 379-amino-acid polypeptide reads, in one-letter code: Lipid-A-disaccharide synthase (379 aa).

It belongs to the LpxB family.

The enzyme catalyses a lipid X + a UDP-2-N,3-O-bis[(3R)-3-hydroxyacyl]-alpha-D-glucosamine = a lipid A disaccharide + UDP + H(+). It participates in bacterial outer membrane biogenesis; LPS lipid A biosynthesis. In terms of biological role, condensation of UDP-2,3-diacylglucosamine and 2,3-diacylglucosamine-1-phosphate to form lipid A disaccharide, a precursor of lipid A, a phosphorylated glycolipid that anchors the lipopolysaccharide to the outer membrane of the cell. This is Lipid-A-disaccharide synthase from Vibrio cholerae serotype O1 (strain ATCC 39541 / Classical Ogawa 395 / O395).